We begin with the raw amino-acid sequence, 1186 residues long: MKTRQNKDSMSMRSGRKKEAPGPREELRSRGRASPGGVSTSSSDGKAEKSRQTAKKARVEEASTPKVNKQGRSEEISESESEETNAPKKTKTEELPRPQSPSDLDSLDGRSLNDDGSSDPRDIDQDNRSTSPSIYSPGSVENDSDSSSGLSQGPARPYHPPPLFPPSPQPPDSTPRQPEASFEPHPSVTPTGYHAPMEPPTSRMFQAPPGAPPPHPQLYPGGTGGVLSGPPMGPKGGGAASSVGGPNGGKQHPPPTTPISVSSSGASGAPPTKPPTTPVGGGNLPSAPPPANFPHVTPNLPPPPALRPLNNASASPPGLGAQPLPGHLPSPHAMGQGMGGLPPGPEKGPTLAPSPHSLPPASSSAPAPPMRFPYSSSSSSSAAASSSSSSSSSSASPFPASQALPSYPHSFPPPTSLSVSNQPPKYTQPSLPSQAVWSQGPPPPPPYGRLLANSNAHPGPFPPSTGAQSTAHPPVSTHHHHHQQQQQQQQQQQQQQQQHHGNSGPPPPGAFPHPLEGGSSHHAHPYAMSPSLGSLRPYPPGPAHLPPPHSQVSYSQAGPNGPPVSSSSNSSSSTSQGSYPCSHPSPSQGPQGAPYPFPPVPTVTTSSATLSTVIATVASSPAGYKTASPPGPPPYGKRAPSPGAYKTATPPGYKPGSPPSFRTGTPPGYRGTSPPAGPGTFKPGSPTVGPGPLPPAGPSGLPSLPPPPAAPASGPPLSATQIKQEPAEEYETPESPVPPARSPSPPPKVVDVPSHASQSARFNKHLDRGFNSCARSDLYFVPLEGSKLAKKRADLVEKVRREAEQRAREEKEREREREREKEREREKERELERSVKLAQEGRAPVECPSLGPVPHRPPFEPGSAVATVPPYLGPDTPALRTLSEYARPHVMSPGNRNHPFYVPLGAVDPGLLGYNVPALYSSDPAAREREREARERDLRDRLKPGFEVKPSELEPLHGVPGPGLDPFPRHGGLALQPGPPGLHPFPFHPSLGPLERERLALAAGPALRPDMSYAERLAAERQHAERVAALGNDPLARLQMLNVTPHHHQHSHIHSHLHLHQQDAIHAASASVHPLIDPLASGSHLTRIPYPAGTLPNPLLPHPLHENEVLRHQLFAAPYRDLPASLSAPMSAAHQLQAMHAQSAELQRLALEQQQWLHAHHPLHSVPLPAQEDYYSHLKKESDKPL.

Disordered regions lie at residues 1-604 (MKTR…PTVT), 618-763 (ASSP…ARFN), and 781-858 (VPLE…HRPP). Positions 16–32 (RKKEAPGPREELRSRGR) match the Nuclear localization signal motif. The segment covering 17-29 (KKEAPGPREELRS) has biased composition (basic and acidic residues). Residue Ser34 is modified to Phosphoserine. Positions 45 to 63 (GKAEKSRQTAKKARVEEAS) are enriched in basic and acidic residues. Phosphoserine is present on residues Ser77, Ser79, Ser100, Ser102, and Ser106. The span at 107 to 127 (LDGRSLNDDGSSDPRDIDQDN) shows a compositional bias: basic and acidic residues. The segment covering 128–151 (RSTSPSIYSPGSVENDSDSSSGLS) has biased composition (polar residues). Residues 157–173 (PYHPPPLFPPSPQPPDS) are compositionally biased toward pro residues. 3 stretches are compositionally biased toward low complexity: residues 258–270 (PISV…SGAP), 349–365 (PTLA…SSSA), and 375–396 (SSSS…SSAS). Residues 416–437 (SLSVSNQPPKYTQPSLPSQAVW) are compositionally biased toward polar residues. The segment covering 484 to 503 (QQQQQQQQQQQQQQQHHGNS) has biased composition (low complexity). The involved in binding BAIAP2 stretch occupies residues 513–563 (HPLEGGSSHHAHPYAMSPSLGSLRPYPPGPAHLPPPHSQVSYSQAGPNGPP). The segment covering 537-549 (PYPPGPAHLPPPH) has biased composition (pro residues). Composition is skewed to low complexity over residues 565–582 (SSSS…YPCS) and 618–628 (ASSPAGYKTAS). The residue at position 628 (Ser628) is a Phosphoserine. Position 637 is an N6-acetyllysine (Lys637). A Phosphothreonine modification is found at Thr649. A Phosphoserine modification is found at Ser657. A Phosphothreonine modification is found at Thr665. Pro residues-rich tracts occupy residues 689–714 (GPGP…PASG) and 735–748 (SPVP…PPPK). A Phosphoserine; by MAPK8 modification is found at Ser735. Residues Ser742 and Ser744 each carry the phosphoserine modification. Residues 791–835 (KRADLVEKVRREAEQRAREEKEREREREREKEREREKERELERSV) show a composition bias toward basic and acidic residues. Residues 875–890 (DTPALRTLSEYARPHV) form a required for interaction with FAT1 region. The residue at position 892 (Ser892) is a Phosphoserine. Positions 1029-1037 (ALGNDPLAR) match the Nuclear export signal motif. Arg1111 is modified (asymmetric dimethylarginine). Lys1179 participates in a covalent cross-link: Glycyl lysine isopeptide (Lys-Gly) (interchain with G-Cter in SUMO2).

Interacts with NR2E1; the interaction represses the transcriptional activity of NR2E1. Interacts with BAIAP2, WWP1, WWP2, WWP3 and RERE. Interacts (via its N-terminus) with MTG8; the interaction enhances transcriptional repression of MTG8. Interacts with FAT1 (via a C-terminal domain). Interacts with PQBP1. In terms of processing, phosphorylated in vitro by MAPK8/JNK1 on Ser-735.

Its subcellular location is the nucleus. The protein localises to the cytoplasm. It localises to the perinuclear region. The protein resides in the cell junction. Transcriptional corepressor. Corepressor of MTG8 transcriptional repression. Recruits NR2E1 to repress transcription. Has some intrinsic repression activity. Promotes vascular smooth cell (VSMC) migration and orientation. The chain is Atrophin-1 (ATN1) from Pan troglodytes (Chimpanzee).